The chain runs to 383 residues: Succinate--CoA ligase [ADP-forming] subunit beta (383 aa).

Positions 9–236 constitute an ATP-grasp domain; that stretch reads KELLGRFGLR…VEAADPQEHR (228 aa). ATP-binding positions include lysine 45, 52-54, glutamate 91, alanine 94, and glutamate 99; that span reads GRG. 2 residues coordinate Mg(2+): asparagine 191 and aspartate 205. Substrate-binding positions include asparagine 256 and 313–315; that span reads GIT.

The protein belongs to the succinate/malate CoA ligase beta subunit family. In terms of assembly, heterotetramer of two alpha and two beta subunits. Requires Mg(2+) as cofactor.

The enzyme catalyses succinate + ATP + CoA = succinyl-CoA + ADP + phosphate. It carries out the reaction GTP + succinate + CoA = succinyl-CoA + GDP + phosphate. Its pathway is carbohydrate metabolism; tricarboxylic acid cycle; succinate from succinyl-CoA (ligase route): step 1/1. Functionally, succinyl-CoA synthetase functions in the citric acid cycle (TCA), coupling the hydrolysis of succinyl-CoA to the synthesis of either ATP or GTP and thus represents the only step of substrate-level phosphorylation in the TCA. The beta subunit provides nucleotide specificity of the enzyme and binds the substrate succinate, while the binding sites for coenzyme A and phosphate are found in the alpha subunit. This chain is Succinate--CoA ligase [ADP-forming] subunit beta, found in Rubrobacter xylanophilus (strain DSM 9941 / JCM 11954 / NBRC 16129 / PRD-1).